Consider the following 510-residue polypeptide: Maturase K (510 aa).

It belongs to the intron maturase 2 family. MatK subfamily.

It localises to the plastid. The protein localises to the chloroplast. Functionally, usually encoded in the trnK tRNA gene intron. Probably assists in splicing its own and other chloroplast group II introns. This Populus alba (White poplar) protein is Maturase K.